We begin with the raw amino-acid sequence, 209 residues long: Ubiquitin-conjugating enzyme E2 S (209 aa).

The 147-residue stretch at 14–160 (QTIRQVMREL…ARMMTEIHAQ (147 aa)) folds into the UBC core domain. The Glycyl thioester intermediate role is filled by C98. The segment at 165-194 (GVGAASDAKDDDGPSTKKHAGLDKKLQDKK) is disordered. Residues 171–194 (DAKDDDGPSTKKHAGLDKKLQDKK) are compositionally biased toward basic and acidic residues.

It belongs to the ubiquitin-conjugating enzyme family.

The enzyme catalyses S-ubiquitinyl-[E1 ubiquitin-activating enzyme]-L-cysteine + [E2 ubiquitin-conjugating enzyme]-L-cysteine = [E1 ubiquitin-activating enzyme]-L-cysteine + S-ubiquitinyl-[E2 ubiquitin-conjugating enzyme]-L-cysteine.. It functions in the pathway protein modification; protein ubiquitination. Functionally, catalyzes the covalent attachment of ubiquitin to other proteins. Acts as an essential factor of the anaphase promoting complex/cyclosome (APC/C), a cell cycle-regulated ubiquitin ligase that controls progression through mitosis. Acts by specifically elongating polyubiquitin chains initiated by the E2 enzyme vih/UbcH10 on APC/C substrates, enhancing the degradation of APC/C substrates by the proteasome and promoting mitotic exit. The chain is Ubiquitin-conjugating enzyme E2 S from Drosophila persimilis (Fruit fly).